Consider the following 184-residue polypeptide: V-type proton ATPase subunit E (184 aa).

Belongs to the V-ATPase E subunit family.

Its function is as follows. Produces ATP from ADP in the presence of a proton gradient across the membrane. This Finegoldia magna (strain ATCC 29328 / DSM 20472 / WAL 2508) (Peptostreptococcus magnus) protein is V-type proton ATPase subunit E.